The following is a 448-amino-acid chain: Probable rhamnogalacturonase E (448 aa).

Positions 1–22 are cleaved as a signal peptide; it reads MTWSTSFLVATSLLSIINSVHA. Residues Cys43 and Cys69 are joined by a disulfide bond. N-linked (GlcNAc...) asparagine glycans are attached at residues Asn54, Asn92, and Asn131. Asp221 serves as the catalytic Proton donor. A disulfide bridge links Cys223 with Cys240. Residues Asn256 and Asn284 are each glycosylated (N-linked (GlcNAc...) asparagine). Residue His296 is part of the active site. 2 N-linked (GlcNAc...) asparagine glycosylation sites follow: Asn323 and Asn328. Disulfide bonds link Cys346/Cys352 and Cys374/Cys382.

The protein belongs to the glycosyl hydrolase 28 family.

It localises to the secreted. In terms of biological role, pectinolytic enzymes consist of four classes of enzymes: pectine lyase, polygalacturonase, pectin methylesterase and rhamnogalacturonase. Hydrolyzes alpha-D-galacturonopyranosyl-(1,2)-alpha-L-rhamnopyranosyl linkages in the backbone of the hairy regions of pectins. The chain is Probable rhamnogalacturonase E (rhgE) from Aspergillus niger (strain ATCC MYA-4892 / CBS 513.88 / FGSC A1513).